The chain runs to 693 residues: DNA-directed RNA polymerase subunit beta' (693 aa).

Residues C76, C78, C94, and C97 each coordinate Zn(2+). Mg(2+) is bound by residues D496, D498, and D500.

This sequence belongs to the RNA polymerase beta' chain family. RpoC1 subfamily. In plastids the minimal PEP RNA polymerase catalytic core is composed of four subunits: alpha, beta, beta', and beta''. When a (nuclear-encoded) sigma factor is associated with the core the holoenzyme is formed, which can initiate transcription. The cofactor is Mg(2+). It depends on Zn(2+) as a cofactor.

It localises to the plastid. The protein resides in the chloroplast. It carries out the reaction RNA(n) + a ribonucleoside 5'-triphosphate = RNA(n+1) + diphosphate. Functionally, DNA-dependent RNA polymerase catalyzes the transcription of DNA into RNA using the four ribonucleoside triphosphates as substrates. The polypeptide is DNA-directed RNA polymerase subunit beta' (Nuphar advena (Common spatterdock)).